The sequence spans 461 residues: Propionyl-CoA carboxylase regulator (461 aa).

The HTH cro/C1-type domain occupies 11–65; sequence LRELRVKLGLTQKVFAERLGASLPYLNQMENNHRPVSATVVLALAQEFGVDVTKL. The segment at residues 22–41 is a DNA-binding region (H-T-H motif); the sequence is QKVFAERLGASLPYLNQMEN.

It belongs to the short-chain fatty acyl-CoA assimilation regulator (ScfR) family.

Functionally, transcriptional regulator that controls propionyl-CoA assimilation through the methylmalonyl-CoA pathway via regulation of pccB expression. The protein is Propionyl-CoA carboxylase regulator of Cereibacter sphaeroides (strain ATCC 17023 / DSM 158 / JCM 6121 / CCUG 31486 / LMG 2827 / NBRC 12203 / NCIMB 8253 / ATH 2.4.1.) (Rhodobacter sphaeroides).